The sequence spans 31 residues: Morintide mO3 (31 aa).

The region spanning 1 to 30 (NRLCCSQYGFCGTTSEYCSRANGCQSNCWG) is the Chitin-binding type-1 domain. Cystine bridges form between Cys4-Cys18 and Cys24-Cys28.

In terms of tissue distribution, seeds (at protein level).

Functionally, chitin-binding protein which functions in defense against chitin-containing fungal pathogens. The chain is Morintide mO3 from Moringa oleifera (Horseradish tree).